Consider the following 234-residue polypeptide: RNA chaperone ProQ (234 aa).

Basic and acidic residues predominate over residues 104–130; that stretch reads LEEAKARVQAQRDARKREAAENGEKRE. Residues 104-186 are disordered; that stretch reads LEEAKARVQA…QRSTPVTSLE (83 aa). Basic residues predominate over residues 131-142; sequence PRRPRPAGKKPT. Basic and acidic residues-rich tracts occupy residues 143–156 and 163–176; these read ARRDGEQGSKEVRK and TSERKPRAKSETTE. The segment covering 177 to 186 has biased composition (polar residues); that stretch reads QRSTPVTSLE.

The protein belongs to the ProQ family.

It is found in the cytoplasm. In terms of biological role, RNA chaperone with significant RNA binding, RNA strand exchange and RNA duplexing activities. May regulate ProP activity through an RNA-based, post-transcriptional mechanism. The polypeptide is RNA chaperone ProQ (Edwardsiella ictaluri (strain 93-146)).